Consider the following 310-residue polypeptide: U-megalopygitoxin(8)-Mo15 (310 aa).

The N-terminal stretch at 1–27 is a signal peptide; sequence MARFSSKNLTKLFQYLVLSLLSPVAFG.

The protein belongs to the megalysin family. Contains 3 disulfide bonds. As to expression, expressed by the venom apparatus.

It localises to the secreted. The protein localises to the target cell membrane. In terms of biological role, may function as a large pore-forming protein. The protein is U-megalopygitoxin(8)-Mo15 of Megalopyge opercularis (Southern flannel moth).